Here is a 438-residue protein sequence, read N- to C-terminus: 3-phosphoshikimate 1-carboxyvinyltransferase (438 aa).

3-phosphoshikimate contacts are provided by K21, S22, and R26. Residue K21 participates in phosphoenolpyruvate binding. Residues G93 and R121 each coordinate phosphoenolpyruvate. The 3-phosphoshikimate site is built by S166, S167, Q168, S194, D324, and K351. Q168 is a phosphoenolpyruvate binding site. The active-site Proton acceptor is D324. Phosphoenolpyruvate contacts are provided by R355 and R395.

It belongs to the EPSP synthase family. As to quaternary structure, monomer.

The protein localises to the cytoplasm. It carries out the reaction 3-phosphoshikimate + phosphoenolpyruvate = 5-O-(1-carboxyvinyl)-3-phosphoshikimate + phosphate. Its pathway is metabolic intermediate biosynthesis; chorismate biosynthesis. In terms of biological role, catalyzes the transfer of the enolpyruvyl moiety of phosphoenolpyruvate (PEP) to the 5-hydroxyl of shikimate-3-phosphate (S3P) to produce enolpyruvyl shikimate-3-phosphate and inorganic phosphate. The chain is 3-phosphoshikimate 1-carboxyvinyltransferase from Methanobrevibacter smithii (strain ATCC 35061 / DSM 861 / OCM 144 / PS).